Consider the following 174-residue polypeptide: Co-chaperone protein HscB (174 aa).

The region spanning 2–74 (NYFTLFDLPR…LNRAIYFLCL (73 aa)) is the J domain.

It belongs to the HscB family. In terms of assembly, interacts with HscA and stimulates its ATPase activity. Interacts with IscU.

Functionally, co-chaperone involved in the maturation of iron-sulfur cluster-containing proteins. Seems to help targeting proteins to be folded toward HscA. The protein is Co-chaperone protein HscB of Buchnera aphidicola subsp. Acyrthosiphon pisum (strain Tuc7).